A 444-amino-acid chain; its full sequence is S-locus-specific glycoprotein (444 aa).

Positions 1-28 (MRGVIPNYHHSYTLFFFVILVLFPHVFS) are cleaved as a signal peptide. A Bulb-type lectin domain is found at 31–159 (TLSPNEALTI…KTNDLDRFMW (129 aa)). N-linked (GlcNAc...) asparagine glycans are attached at residues Asn43, Asn125, Asn243, and Asn396. In terms of domain architecture, PAN spans 356-437 (CGEGDGFLRM…GGQDLYVKVA (82 aa)). Intrachain disulfides connect Cys387–Cys412 and Cys395–Cys397.

In terms of tissue distribution, stigma.

Its function is as follows. Involved in sporophytic self-incompatibility system (the inability of flowering plants to achieve self-fertilization). The polypeptide is S-locus-specific glycoprotein (SLSG) (Brassica oleracea var. alboglabra (Chinese kale)).